Here is a 133-residue protein sequence, read N- to C-terminus: Holo-[acyl-carrier-protein] synthase (133 aa).

Mg(2+)-binding residues include aspartate 8 and glutamate 58.

Belongs to the P-Pant transferase superfamily. AcpS family. Mg(2+) is required as a cofactor.

It localises to the cytoplasm. It carries out the reaction apo-[ACP] + CoA = holo-[ACP] + adenosine 3',5'-bisphosphate + H(+). Functionally, transfers the 4'-phosphopantetheine moiety from coenzyme A to a Ser of acyl-carrier-protein. This chain is Holo-[acyl-carrier-protein] synthase, found in Sphingopyxis alaskensis (strain DSM 13593 / LMG 18877 / RB2256) (Sphingomonas alaskensis).